A 60-amino-acid polypeptide reads, in one-letter code: DNA-directed RNA polymerase subunit Rpo6 (60 aa).

This sequence belongs to the archaeal Rpo6/eukaryotic RPB6 RNA polymerase subunit family. In terms of assembly, part of the RNA polymerase complex.

It localises to the cytoplasm. It catalyses the reaction RNA(n) + a ribonucleoside 5'-triphosphate = RNA(n+1) + diphosphate. DNA-dependent RNA polymerase (RNAP) catalyzes the transcription of DNA into RNA using the four ribonucleoside triphosphates as substrates. In Picrophilus torridus (strain ATCC 700027 / DSM 9790 / JCM 10055 / NBRC 100828 / KAW 2/3), this protein is DNA-directed RNA polymerase subunit Rpo6.